The chain runs to 191 residues: ECF RNA polymerase sigma-E factor (191 aa).

Residues 1–153 (MSEQLTDQVL…MAITLRELDG (153 aa)) are binds RNAP core. Residues 25–92 (LVVRYQHKVA…KNYLVAQGRR (68 aa)) are sigma-70 factor domain-2. The short motif at 48 to 61 (DVVQEAFIKAYRAL) is the Polymerase core binding element. The sigma-70 factor domain-4 stretch occupies residues 129-180 (QIVFRTIESLPEDLRMAITLRELDGLSYEEIAAIMDCPVGTVRSRIFRAREA). Residues 156–175 (YEEIAAIMDCPVGTVRSRIF) constitute a DNA-binding region (H-T-H motif).

This sequence belongs to the sigma-70 factor family. ECF subfamily. Interacts transiently with the RNAP catalytic core formed by RpoA, RpoB, RpoC and RpoZ (2 alpha, 1 beta, 1 beta' and 1 omega subunit) to form the RNAP holoenzyme that can initiate transcription. Interacts 1:1 with anti-sigma-E factor RseA which prevents binding to RNAP catalytic core.

Its subcellular location is the cytoplasm. Its activity is regulated as follows. ECF sigma-E is held in an inactive form by its cognate anti-sigma factor (RseA) until released by regulated intramembrane proteolysis (RIP). RIP occurs when an extracytoplasmic signal (periplasmic stress and excess LPS) triggers a concerted proteolytic cascade to transmit information and elicit cellular responses. The anti-sigma factor RseA is an inner membrane protein, binding sigma-E in the cytoplasm and RseB in the periplasm. RseA is first cut extracytoplasmically (site-1 protease, S1P, by DegS), then within the membrane itself (site-2 protease, S2P, by RseP), while cytoplasmic proteases (predominantly ClpX-ClpP) finish degrading the regulatory protein, liberating sigma-E. Degradation of RseA requires 2 signals to activate DegS; an outer membrane protein (OMP) signal activates DegS, while an LPS signal causes release of RseB from RseA, freeing RseA to be cleaved. In terms of biological role, sigma factors are initiation factors that promote the attachment of RNA polymerase (RNAP) to specific initiation sites and are then released. Extracytoplasmic function (ECF) sigma-E controls the envelope stress response, responding to periplasmic protein stress, increased levels of periplasmic lipopolysaccharide (LPS) as well as heat shock and oxidative stress; it controls protein processing in the extracytoplasmic compartment. In Escherichia coli O157:H7, this protein is ECF RNA polymerase sigma-E factor (rpoE).